We begin with the raw amino-acid sequence, 115 residues long: NADH-ubiquinone oxidoreductase chain 3 (115 aa).

3 consecutive transmembrane segments (helical) span residues 3–23, 55–75, and 84–104; these read LMLALTVNTLLTALLTIIMFW, FFLVAITFLLFDLEIALLLSL, and LPTMIKTSIMFITILALSLAY.

This sequence belongs to the complex I subunit 3 family. In terms of assembly, core subunit of respiratory chain NADH dehydrogenase (Complex I) which is composed of 45 different subunits. Interacts with TMEM186. Interacts with TMEM242.

The protein localises to the mitochondrion inner membrane. The enzyme catalyses a ubiquinone + NADH + 5 H(+)(in) = a ubiquinol + NAD(+) + 4 H(+)(out). Functionally, core subunit of the mitochondrial membrane respiratory chain NADH dehydrogenase (Complex I) which catalyzes electron transfer from NADH through the respiratory chain, using ubiquinone as an electron acceptor. Essential for the catalytic activity of complex I. This is NADH-ubiquinone oxidoreductase chain 3 from Papio hamadryas (Hamadryas baboon).